A 170-amino-acid chain; its full sequence is Urease accessory protein UreE (170 aa).

The protein belongs to the UreE family.

The protein localises to the cytoplasm. Its function is as follows. Involved in urease metallocenter assembly. Binds nickel. Probably functions as a nickel donor during metallocenter assembly. The sequence is that of Urease accessory protein UreE from Helicobacter pylori (strain HPAG1).